Here is a 389-residue protein sequence, read N- to C-terminus: 23S rRNA (uracil(747)-C(5))-methyltransferase RlmC (389 aa).

[4Fe-4S] cluster contacts are provided by C12, C20, C23, and C99. Positions 224, 253, 274, and 321 each coordinate S-adenosyl-L-methionine. Residue C348 is the Nucleophile of the active site.

Belongs to the class I-like SAM-binding methyltransferase superfamily. RNA M5U methyltransferase family. RlmC subfamily.

The enzyme catalyses uridine(747) in 23S rRNA + S-adenosyl-L-methionine = 5-methyluridine(747) in 23S rRNA + S-adenosyl-L-homocysteine + H(+). Functionally, catalyzes the formation of 5-methyl-uridine at position 747 (m5U747) in 23S rRNA. The chain is 23S rRNA (uracil(747)-C(5))-methyltransferase RlmC from Shewanella sp. (strain W3-18-1).